The chain runs to 227 residues: PKHD-type hydroxylase BamMC406_5004 (227 aa).

Residues 80–179 (QVYPPLFNRY…RVASFFWVQS (100 aa)) enclose the Fe2OG dioxygenase domain. Fe cation is bound by residues His-98, Asp-100, and His-160. Residue Arg-170 coordinates 2-oxoglutarate.

The cofactor is Fe(2+). L-ascorbate serves as cofactor.

The sequence is that of PKHD-type hydroxylase BamMC406_5004 from Burkholderia ambifaria (strain MC40-6).